Reading from the N-terminus, the 567-residue chain is Proline--tRNA ligase (567 aa).

This sequence belongs to the class-II aminoacyl-tRNA synthetase family. ProS type 1 subfamily. In terms of assembly, homodimer.

Its subcellular location is the cytoplasm. The enzyme catalyses tRNA(Pro) + L-proline + ATP = L-prolyl-tRNA(Pro) + AMP + diphosphate. Its function is as follows. Catalyzes the attachment of proline to tRNA(Pro) in a two-step reaction: proline is first activated by ATP to form Pro-AMP and then transferred to the acceptor end of tRNA(Pro). As ProRS can inadvertently accommodate and process non-cognate amino acids such as alanine and cysteine, to avoid such errors it has two additional distinct editing activities against alanine. One activity is designated as 'pretransfer' editing and involves the tRNA(Pro)-independent hydrolysis of activated Ala-AMP. The other activity is designated 'posttransfer' editing and involves deacylation of mischarged Ala-tRNA(Pro). The misacylated Cys-tRNA(Pro) is not edited by ProRS. This is Proline--tRNA ligase from Geobacillus thermodenitrificans (strain NG80-2).